Here is a 267-residue protein sequence, read N- to C-terminus: uncharacterized protein (267 aa).

This is an uncharacterized protein from Escherichia coli (strain K12).